We begin with the raw amino-acid sequence, 333 residues long: 6-phosphogluconolactonase (333 aa).

The protein belongs to the cycloisomerase 2 family.

It catalyses the reaction 6-phospho-D-glucono-1,5-lactone + H2O = 6-phospho-D-gluconate + H(+). Its pathway is carbohydrate degradation; pentose phosphate pathway; D-ribulose 5-phosphate from D-glucose 6-phosphate (oxidative stage): step 2/3. Catalyzes the hydrolysis of 6-phosphogluconolactone to 6-phosphogluconate. In Yersinia enterocolitica serotype O:8 / biotype 1B (strain NCTC 13174 / 8081), this protein is 6-phosphogluconolactonase.